A 209-amino-acid chain; its full sequence is Rac-like GTP-binding protein ARAC7 (209 aa).

13–20 (GDGAVGKT) lines the GTP pocket. An Effector region motif is present at residues 35-43 (YIPTVFDNF). GTP is bound by residues 60 to 64 (DTAGQ) and 118 to 121 (TKLD). Residues Cys-196, Cys-203, and Cys-206 are each lipidated (S-palmitoyl cysteine).

This sequence belongs to the small GTPase superfamily. Rho family. Post-translationally, although this sequence has a C-terminal -CXXX, it is palmitoylated at Cys-206, rather than prenylated.

Its subcellular location is the membrane. Functionally, acts as a negative regulator of abscisic acid (ABA) responses. This is Rac-like GTP-binding protein ARAC7 (ARAC7) from Arabidopsis thaliana (Mouse-ear cress).